We begin with the raw amino-acid sequence, 302 residues long: Ectoine dioxygenase (302 aa).

Glutamine 128 contributes to the L-ectoine binding site. Residue lysine 134 participates in 2-oxoglutarate binding. Histidine 145, aspartate 147, and histidine 246 together coordinate Fe cation.

Belongs to the PhyH family. EctD subfamily. As to quaternary structure, homodimer. Fe(2+) is required as a cofactor.

It carries out the reaction L-ectoine + 2-oxoglutarate + O2 = 5-hydroxyectoine + succinate + CO2. Its function is as follows. Involved in the biosynthesis of 5-hydroxyectoine, called compatible solute, which helps organisms to survive extreme osmotic stress by acting as a highly soluble organic osmolyte. Catalyzes the 2-oxoglutarate-dependent selective hydroxylation of L-ectoine to yield (4S,5S)-5-hydroxyectoine. The chain is Ectoine dioxygenase from Stutzerimonas stutzeri (strain A1501) (Pseudomonas stutzeri).